The primary structure comprises 144 residues: 3-dehydroquinate dehydratase (144 aa).

Catalysis depends on Y22, which acts as the Proton acceptor. Residues N73, H79, and D86 each contribute to the substrate site. H99 acts as the Proton donor in catalysis. Substrate is bound by residues 100 to 101 (LS) and R110.

It belongs to the type-II 3-dehydroquinase family. Homododecamer.

The enzyme catalyses 3-dehydroquinate = 3-dehydroshikimate + H2O. The protein operates within metabolic intermediate biosynthesis; chorismate biosynthesis; chorismate from D-erythrose 4-phosphate and phosphoenolpyruvate: step 3/7. Catalyzes a trans-dehydration via an enolate intermediate. This Herpetosiphon aurantiacus (strain ATCC 23779 / DSM 785 / 114-95) protein is 3-dehydroquinate dehydratase.